The following is a 370-amino-acid chain: Cytochrome b (370 aa).

Transmembrane regions (helical) follow at residues 25-45 (FGSM…FLAV), 69-90 (WMMQ…YIHI), 105-125 (WLSG…GYVL), and 170-190 (FFAL…LHIL). Positions 75 and 89 each coordinate heme b. The heme b site is built by His-174 and His-188. A ubiquinone is bound at residue His-193. A run of 4 helical transmembrane segments spans residues 218 to 238 (YKDM…VSFF), 280 to 300 (LGGA…PFTH), 312 to 332 (LMQL…WTAT), and 339 to 358 (FTTI…ISNP).

The protein belongs to the cytochrome b family. The cytochrome bc1 complex contains 3 respiratory subunits (MT-CYB, CYC1 and UQCRFS1), 2 core proteins (UQCRC1 and UQCRC2) and probably 6 low-molecular weight proteins. The cofactor is heme b.

It localises to the mitochondrion inner membrane. Its function is as follows. Component of the ubiquinol-cytochrome c reductase complex (complex III or cytochrome b-c1 complex) that is part of the mitochondrial respiratory chain. The b-c1 complex mediates electron transfer from ubiquinol to cytochrome c. Contributes to the generation of a proton gradient across the mitochondrial membrane that is then used for ATP synthesis. The sequence is that of Cytochrome b (MT-CYB) from Chilabothrus strigilatus strigilatus (New Providence boa constrictor).